The sequence spans 58 residues: Small ribosomal subunit protein bS21B (58 aa).

It belongs to the bacterial ribosomal protein bS21 family.

The protein is Small ribosomal subunit protein bS21B of Trichormus variabilis (strain ATCC 29413 / PCC 7937) (Anabaena variabilis).